The sequence spans 120 residues: NAD(P)H-quinone oxidoreductase subunit 3 (120 aa).

A run of 3 helical transmembrane segments spans residues 10–30 (LLVF…ASAL), 64–84 (MFAL…PWAV), and 89–109 (LGLL…VGLV).

This sequence belongs to the complex I subunit 3 family. As to quaternary structure, NDH-1 can be composed of about 15 different subunits; different subcomplexes with different compositions have been identified which probably have different functions.

The protein resides in the cellular thylakoid membrane. It catalyses the reaction a plastoquinone + NADH + (n+1) H(+)(in) = a plastoquinol + NAD(+) + n H(+)(out). The catalysed reaction is a plastoquinone + NADPH + (n+1) H(+)(in) = a plastoquinol + NADP(+) + n H(+)(out). In terms of biological role, NDH-1 shuttles electrons from an unknown electron donor, via FMN and iron-sulfur (Fe-S) centers, to quinones in the respiratory and/or the photosynthetic chain. The immediate electron acceptor for the enzyme in this species is believed to be plastoquinone. Couples the redox reaction to proton translocation, and thus conserves the redox energy in a proton gradient. Cyanobacterial NDH-1 also plays a role in inorganic carbon-concentration. This Synechococcus sp. (strain JA-2-3B'a(2-13)) (Cyanobacteria bacterium Yellowstone B-Prime) protein is NAD(P)H-quinone oxidoreductase subunit 3.